A 195-amino-acid polypeptide reads, in one-letter code: Protein GrpE (195 aa).

It belongs to the GrpE family. Homodimer.

It localises to the cytoplasm. Its function is as follows. Participates actively in the response to hyperosmotic and heat shock by preventing the aggregation of stress-denatured proteins, in association with DnaK and GrpE. It is the nucleotide exchange factor for DnaK and may function as a thermosensor. Unfolded proteins bind initially to DnaJ; upon interaction with the DnaJ-bound protein, DnaK hydrolyzes its bound ATP, resulting in the formation of a stable complex. GrpE releases ADP from DnaK; ATP binding to DnaK triggers the release of the substrate protein, thus completing the reaction cycle. Several rounds of ATP-dependent interactions between DnaJ, DnaK and GrpE are required for fully efficient folding. In Francisella tularensis subsp. holarctica (strain FTNF002-00 / FTA), this protein is Protein GrpE.